The sequence spans 133 residues: FPRL1 inhibitory protein (133 aa).

An N-terminal signal peptide occupies residues 1–28; that stretch reads MKKNITKTIIASTVIAAGLLTQTNDAKA.

It belongs to the CHIPS/FLIPr family.

It localises to the secreted. Functionally, may be involved in countering the first line of host defense mechanisms. Impairs the leukocyte response to FPRL1 agonists by binding directly to host FPRL1. Exerts, in vitro, anti-inflammatory activity by inhibiting calcium mobilization and cell migration toward chemoattractants. This chain is FPRL1 inhibitory protein (flr), found in Staphylococcus aureus (strain Newman).